We begin with the raw amino-acid sequence, 301 residues long: Prohibitin-2 (301 aa).

Necessary for transcriptional repression stretches follow at residues 19–49 and 150–174; these read MGTA…GHRA and ASQL…RAKD. Residues 191–237 are a coiled coil; the sequence is REYTAAVESKQVAQQEAQRAQFLVEKAKQDQKQKIVQAEGEAAAAKM.

The protein belongs to the prohibitin family. In terms of assembly, the mitochondrial prohibitin complex consists of two subunits (PHB1 and PHB2), assembled into a membrane-associated ring-shaped supercomplex of approximately 1 mDa.

It is found in the mitochondrion inner membrane. The protein resides in the cytoplasm. The protein localises to the nucleus. Its subcellular location is the cell membrane. Protein with pleiotropic attributes mediated in a cell-compartment- and tissue-specific manner, which include the plasma membrane-associated cell signaling functions, mitochondrial chaperone, and transcriptional co-regulator of transcription factors and sex steroid hormones in the nucleus. In terms of biological role, in the mitochondria, together with PHB, forms large ring complexes (prohibitin complexes) in the inner mitochondrial membrane (IMM) and functions as a chaperone protein that stabilizes mitochondrial respiratory enzymes and maintains mitochondrial integrity in the IMM, which is required for mitochondrial morphogenesis, neuronal survival, and normal lifespan. Functionally, in the nucleus, serves as transcriptional co-regulator. The chain is Prohibitin-2 (phb2) from Xenopus tropicalis (Western clawed frog).